Here is a 349-residue protein sequence, read N- to C-terminus: Nitrilase, bromoxynil-specific (349 aa).

One can recognise a CN hydrolase domain in the interval 5 to 274 (FKAAAVQAEP…EGIVYAEIDL (270 aa)). The active-site Proton acceptor is the Glu45. The active-site Proton donor is the Lys127. The active-site Nucleophile is the Cys161.

This sequence belongs to the carbon-nitrogen hydrolase superfamily. Nitrilase family. Homodimer.

It carries out the reaction a nitrile + 2 H2O = a carboxylate + NH4(+). Specific for the herbicide bromoxynil (3,5-dibromo-4-hydroxybenzonitrile); converts it to its metabolite 3,5-dibromo-4-hydroxybenzoic acid. This chain is Nitrilase, bromoxynil-specific (bxn), found in Klebsiella pneumoniae subsp. ozaenae.